The primary structure comprises 162 residues: Transcription antitermination protein RfaH (162 aa).

The protein belongs to the RfaH family. As to quaternary structure, interacts with both the nontemplate DNA and the RNA polymerase (RNAP).

In terms of biological role, enhances distal genes transcription elongation in a specialized subset of operons that encode extracytoplasmic components. RfaH is recruited into a multi-component RNA polymerase complex by the ops element, which is a short conserved DNA sequence located downstream of the main promoter of these operons. Once bound, RfaH suppresses pausing and inhibits Rho-dependent and intrinsic termination at a subset of sites. Termination signals are bypassed, which allows complete synthesis of long RNA chains. Also negatively controls expression and surface presentation of AG43 and possibly another AG43-independent factor that mediates cell-cell interactions and biofilm formation,. The chain is Transcription antitermination protein RfaH from Escherichia coli O6:K15:H31 (strain 536 / UPEC).